The following is a 247-amino-acid chain: 2,3-bisphosphoglycerate-dependent phosphoglycerate mutase (247 aa).

Residues 8–15, 21–22, R60, 87–90, K98, 114–115, and 183–184 each bind substrate; these read RHGESQWN, TG, ERHY, RR, and GN. H9 serves as the catalytic Tele-phosphohistidine intermediate. Catalysis depends on E87, which acts as the Proton donor/acceptor.

This sequence belongs to the phosphoglycerate mutase family. BPG-dependent PGAM subfamily.

The enzyme catalyses (2R)-2-phosphoglycerate = (2R)-3-phosphoglycerate. It participates in carbohydrate degradation; glycolysis; pyruvate from D-glyceraldehyde 3-phosphate: step 3/5. Catalyzes the interconversion of 2-phosphoglycerate and 3-phosphoglycerate. In Chlorobium chlorochromatii (strain CaD3), this protein is 2,3-bisphosphoglycerate-dependent phosphoglycerate mutase.